Consider the following 800-residue polypeptide: Aldehyde dehydrogenase family 16 member A1 (800 aa).

The protein belongs to the aldehyde dehydrogenase family. Interacts with SPG21.

In Bos taurus (Bovine), this protein is Aldehyde dehydrogenase family 16 member A1 (ALDH16A1).